The following is a 732-amino-acid chain: uncharacterized protein (732 aa).

The TR mART core domain occupies 163-390 (YYTINELNYL…FGIVAKKKYE (228 aa)). Catalysis depends on residues R285, S309, and E354.

This is an uncharacterized protein from Acanthamoeba polyphaga mimivirus (APMV).